The chain runs to 505 residues: Monocarboxylate transporter 6 (505 aa).

The Cytoplasmic portion of the chain corresponds to 1–17 (MPQALERADGSWAWVVL). Residues 18 to 38 (LATMVTQGLTLGFPTCIGIFF) traverse the membrane as a helical segment. Residues 39-53 (TELQWEFQASNSETS) lie on the Extracellular side of the membrane. Residues 54–74 (WFPSILTAVLHMAGPLCSILV) form a helical membrane-spanning segment. Residues 75-80 (GRFGCR) lie on the Cytoplasmic side of the membrane. A helical transmembrane segment spans residues 81–101 (VTVMLGGVLASLGMVASSFSH). Residues 102-110 (NLSQLYFTA) lie on the Extracellular side of the membrane. The helical transmembrane segment at 111-131 (GFITGLGMCFSFQSSITVLGF) threads the bilayer. The Cytoplasmic segment spans residues 132-137 (YFVRRR). The chain crosses the membrane as a helical span at residues 138 to 158 (VLANALASMGVSLGITLWPLL). The Extracellular segment spans residues 159 to 171 (SRYLLENLGWRGT). The chain crosses the membrane as a helical span at residues 172 to 192 (FLVFGGIFLHCCICGAIIRPV). Residues 193 to 239 (ATSVAPETKECPPPPPETPALGCLAACGRTIQRHLAFDILRHNTGYC) are Cytoplasmic-facing. The chain crosses the membrane as a helical span at residues 240-260 (VYILGVMWSVLGFPLPQVFLV). Residues 261-274 (PYAMWHSVDEQQAA) are Extracellular-facing. A helical transmembrane segment spans residues 275-295 (LLISIIGFSNIFLRPLAGLMA). Topologically, residues 296-305 (GRPAFASHRK) are cytoplasmic. Residues 306–326 (YLFSLALLLNGLTNLVCAASG) traverse the membrane as a helical segment. The Extracellular segment spans residues 327–329 (DFW). A helical membrane pass occupies residues 330–350 (VLVGYCLAYSVSMSGIGALIF). Over 351–367 (QVLMDIVPMDQFPRALG) the chain is Cytoplasmic. A helical membrane pass occupies residues 368–388 (LFTVLDGLAFLISPPLAGLLL). Residues 389–396 (DATNNFSY) lie on the Extracellular side of the membrane. Residues 397-417 (VFYMSSFFLISAALFMGGSFY) form a helical membrane-spanning segment. Residues 418 to 505 (ALQKKEQGKQ…QTALGWNSPT (88 aa)) lie on the Cytoplasmic side of the membrane. The segment at 443 to 464 (KDGPGKQRSPEIMCQSSRQPRP) is disordered.

Belongs to the major facilitator superfamily. Monocarboxylate porter (TC 2.A.1.13) family. Highly expressed in kidney.

The protein resides in the cell membrane. Functionally, proton-linked monocarboxylate transporter. Catalyzes the rapid transport across the plasma membrane of many monocarboxylates such as lactate, pyruvate, branched-chain oxo acids derived from leucine, valine and isoleucine, and the ketone bodies acetoacetate, beta-hydroxybutyrate and acetate. This chain is Monocarboxylate transporter 6 (SLC16A5), found in Homo sapiens (Human).